The primary structure comprises 248 residues: Homeotic protein ultrabithorax (248 aa).

A compositionally biased stretch (gly residues) spans 116 to 125 (GTGGGGGGSA). The segment at 116-191 (GTGGGGGGSA…GSAGVVGGAG (76 aa)) is disordered. Residues 126–139 (GSANGANNTANGQN) are compositionally biased toward low complexity. Composition is skewed to gly residues over residues 140-152 (TSGG…GGGM) and 182-191 (GSAGVVGGAG). Positions 241–246 (FYPWMA) match the Antp-type hexapeptide motif.

It belongs to the Antp homeobox family.

It is found in the nucleus. Its function is as follows. Sequence-specific transcription factor which is part of a developmental regulatory system that provides cells with specific positional identities on the anterior-posterior axis. Binds the consensus region 5'-TTAAT[GT][GA]-3'. The protein is Homeotic protein ultrabithorax (Ubx) of Musca domestica (House fly).